A 248-amino-acid chain; its full sequence is 3-deoxy-manno-octulosonate cytidylyltransferase (248 aa).

It belongs to the KdsB family.

The protein localises to the cytoplasm. The enzyme catalyses 3-deoxy-alpha-D-manno-oct-2-ulosonate + CTP = CMP-3-deoxy-beta-D-manno-octulosonate + diphosphate. Its pathway is nucleotide-sugar biosynthesis; CMP-3-deoxy-D-manno-octulosonate biosynthesis; CMP-3-deoxy-D-manno-octulosonate from 3-deoxy-D-manno-octulosonate and CTP: step 1/1. The protein operates within bacterial outer membrane biogenesis; lipopolysaccharide biosynthesis. In terms of biological role, activates KDO (a required 8-carbon sugar) for incorporation into bacterial lipopolysaccharide in Gram-negative bacteria. The sequence is that of 3-deoxy-manno-octulosonate cytidylyltransferase from Salmonella arizonae (strain ATCC BAA-731 / CDC346-86 / RSK2980).